Here is a 1015-residue protein sequence, read N- to C-terminus: Putative helicase mov-10-B.2 (1015 aa).

A disordered region spans residues 94-130 (QWFRPRRRQQNQANATPGNVSSVTPSSDQGPSCPESG). Residues 109–123 (TPGNVSSVTPSSDQG) show a composition bias toward polar residues. An ATP-binding site is contributed by 555–562 (GPPGTGKT). A DEAG box motif is present at residues 677–680 (DEAG).

This sequence belongs to the DNA2/NAM7 helicase family. SDE3 subfamily.

It localises to the cytoplasm. The protein resides in the P-body. The enzyme catalyses ATP + H2O = ADP + phosphate + H(+). Its function is as follows. Probable RNA helicase. Required for RNA-mediated gene silencing by the RNA-induced silencing complex (RISC). Required for both miRNA-mediated translational repression and miRNA-mediated cleavage of complementary mRNAs by RISC. This chain is Putative helicase mov-10-B.2 (mov10b.2), found in Danio rerio (Zebrafish).